Reading from the N-terminus, the 389-residue chain is Acetate kinase (389 aa).

Residue Asn9 coordinates Mg(2+). Lys16 provides a ligand contact to ATP. Position 77 (Arg77) interacts with substrate. Asp134 functions as the Proton donor/acceptor in the catalytic mechanism. ATP contacts are provided by residues 194–198 (HLGNG), 268–270 (DFR), and 316–320 (GVGEN). Glu370 is a binding site for Mg(2+).

The protein belongs to the acetokinase family. Homodimer. Mg(2+) is required as a cofactor. It depends on Mn(2+) as a cofactor.

It localises to the cytoplasm. It carries out the reaction acetate + ATP = acetyl phosphate + ADP. The protein operates within metabolic intermediate biosynthesis; acetyl-CoA biosynthesis; acetyl-CoA from acetate: step 1/2. Its function is as follows. Catalyzes the formation of acetyl phosphate from acetate and ATP. Can also catalyze the reverse reaction. This Mycolicibacterium vanbaalenii (strain DSM 7251 / JCM 13017 / BCRC 16820 / KCTC 9966 / NRRL B-24157 / PYR-1) (Mycobacterium vanbaalenii) protein is Acetate kinase.